A 175-amino-acid chain; its full sequence is CDP-archaeol synthase (175 aa).

The next 4 membrane-spanning stretches (helical) occupy residues 41–61, 82–102, 122–142, and 150–170; these read GLFS…WLSF, LIVV…KSFF, FVVG…VSNF, and VIII…FIGV.

Belongs to the CDP-archaeol synthase family. The cofactor is Mg(2+).

Its subcellular location is the cell membrane. It catalyses the reaction 2,3-bis-O-(geranylgeranyl)-sn-glycerol 1-phosphate + CTP + H(+) = CDP-2,3-bis-O-(geranylgeranyl)-sn-glycerol + diphosphate. Its pathway is membrane lipid metabolism; glycerophospholipid metabolism. Catalyzes the formation of CDP-2,3-bis-(O-geranylgeranyl)-sn-glycerol (CDP-archaeol) from 2,3-bis-(O-geranylgeranyl)-sn-glycerol 1-phosphate (DGGGP) and CTP. This reaction is the third ether-bond-formation step in the biosynthesis of archaeal membrane lipids. The chain is CDP-archaeol synthase from Methanosarcina mazei (strain ATCC BAA-159 / DSM 3647 / Goe1 / Go1 / JCM 11833 / OCM 88) (Methanosarcina frisia).